A 322-amino-acid chain; its full sequence is ATP-dependent 6-phosphofructokinase (322 aa).

An ATP-binding site is contributed by Gly-12. 22–26 (RATAK) is an ADP binding site. Residues 73 to 74 (RS) and 103 to 106 (GDGS) contribute to the ATP site. Position 104 (Asp-104) interacts with Mg(2+). A substrate-binding site is contributed by 127–129 (TID). Asp-129 acts as the Proton acceptor in catalysis. ADP is bound at residue Arg-156. Residues Arg-164 and 171-173 (MGR) contribute to the substrate site. ADP contacts are provided by residues 187–189 (GGD) and 215–217 (KLH). Substrate contacts are provided by residues Glu-224, Arg-245, and 251–254 (HIQR).

Belongs to the phosphofructokinase type A (PFKA) family. ATP-dependent PFK group I subfamily. Prokaryotic clade 'B1' sub-subfamily. In terms of assembly, homotetramer. Requires Mg(2+) as cofactor.

The protein localises to the cytoplasm. The enzyme catalyses beta-D-fructose 6-phosphate + ATP = beta-D-fructose 1,6-bisphosphate + ADP + H(+). Its pathway is carbohydrate degradation; glycolysis; D-glyceraldehyde 3-phosphate and glycerone phosphate from D-glucose: step 3/4. With respect to regulation, allosterically activated by ADP and other diphosphonucleosides, and allosterically inhibited by phosphoenolpyruvate. Catalyzes the phosphorylation of D-fructose 6-phosphate to fructose 1,6-bisphosphate by ATP, the first committing step of glycolysis. The sequence is that of ATP-dependent 6-phosphofructokinase from Fusobacterium nucleatum subsp. nucleatum (strain ATCC 25586 / DSM 15643 / BCRC 10681 / CIP 101130 / JCM 8532 / KCTC 2640 / LMG 13131 / VPI 4355).